A 316-amino-acid polypeptide reads, in one-letter code: Ribonuclease Z (316 aa).

Zn(2+) is bound by residues His63, His65, Asp67, His68, His143, Asp213, and His271. The Proton acceptor role is filled by Asp67.

Belongs to the RNase Z family. Homodimer. Zn(2+) serves as cofactor.

The enzyme catalyses Endonucleolytic cleavage of RNA, removing extra 3' nucleotides from tRNA precursor, generating 3' termini of tRNAs. A 3'-hydroxy group is left at the tRNA terminus and a 5'-phosphoryl group is left at the trailer molecule.. In terms of biological role, zinc phosphodiesterase, which displays some tRNA 3'-processing endonuclease activity. Probably involved in tRNA maturation, by removing a 3'-trailer from precursor tRNA. The polypeptide is Ribonuclease Z (Bacteroides thetaiotaomicron (strain ATCC 29148 / DSM 2079 / JCM 5827 / CCUG 10774 / NCTC 10582 / VPI-5482 / E50)).